The primary structure comprises 148 residues: UPF0591 membrane protein C15E1.02c (148 aa).

3 helical membrane passes run 14–34 (AILLGIAFDHAASFLVYGPLM), 80–102 (LLQLTGTVTLKGAFFVGLYVFGA), and 122–142 (ILVKTISSLVKSVGLSVALIG).

This sequence belongs to the UPF0591 family.

It localises to the membrane. This chain is UPF0591 membrane protein C15E1.02c, found in Schizosaccharomyces pombe (strain 972 / ATCC 24843) (Fission yeast).